Here is a 333-residue protein sequence, read N- to C-terminus: Phospholipid phosphatase-related protein type 1 (333 aa).

The next 3 helical transmembrane spans lie at 12–32, 66–86, and 126–146; these read IIPCFIFVELVIMAGTVLLAY, FIQPLILYCVVAAAPTAIIFV, and FIGVFAFGLFATDIFVNAGQV. Asparagine 162 is a glycosylation site (N-linked (GlcNAc...) asparagine). The next 3 membrane-spanning stretches (helical) occupy residues 200–217, 223–243, and 256–276; these read ASLSVYSAVYVTMYITST, SRLAKPVLCLGLLCAAFLTGL, and VVAGFILGSSIALFLGICVVN.

This sequence belongs to the PA-phosphatase related phosphoesterase family.

The protein resides in the cell membrane. The protein localises to the cell projection. It localises to the neuron projection. In terms of biological role, may play a role in neurite outgrowth and neurogenesis. The chain is Phospholipid phosphatase-related protein type 1 (plppr1) from Danio rerio (Zebrafish).